We begin with the raw amino-acid sequence, 273 residues long: Thioredoxin-like 1-3, chloroplastic (273 aa).

A chloroplast-targeting transit peptide spans 1–44; sequence MATDSFIKLNPISFNRARFDLRDFAGISPKSISSLCCISPRLIS. The 141-residue stretch at 62–202 folds into the Thioredoxin domain; sequence LFSKKKIPAF…FKEALEKHGR (141 aa). Active-site nucleophile residues include cysteine 125 and cysteine 128. A disulfide bond links cysteine 125 and cysteine 128.

It belongs to the thioredoxin family.

Its subcellular location is the plastid. The protein resides in the chloroplast. Probable thiol-disulfide oxidoreductase that may participate in various redox reactions. The protein is Thioredoxin-like 1-3, chloroplastic of Arabidopsis thaliana (Mouse-ear cress).